The primary structure comprises 80 residues: Turripeptide VI/VII-01 (80 aa).

The N-terminal stretch at 1-22 (MRLQLILTITLLLTSFMGYRDA) is a signal peptide. The propeptide occupies 23–36 (AVIQGKTERSAMKM). 3 disulfide bridges follow: Cys-48–Cys-61, Cys-50–Cys-65, and Cys-60–Cys-70. The propeptide occupies 77–80 (SSAI).

Expressed by the venom duct.

It localises to the secreted. The sequence is that of Turripeptide VI/VII-01 from Gemmula speciosa (Splendid gem-turris).